A 371-amino-acid polypeptide reads, in one-letter code: N-methyl-L-tryptophan oxidase (371 aa).

Residue 4–34 (DLIVIGSGSVGSAAGYYASQAGLNVLMIDSA) participates in FAD binding. Position 307 is an S-8alpha-FAD cysteine (Cys-307).

Belongs to the MSOX/MTOX family. MTOX subfamily. Monomer. The cofactor is FAD.

The catalysed reaction is N(alpha)-methyl-L-tryptophan + O2 + H2O = L-tryptophan + formaldehyde + H2O2. Functionally, catalyzes the oxidative demethylation of N-methyl-L-tryptophan. In Yersinia pseudotuberculosis serotype O:1b (strain IP 31758), this protein is N-methyl-L-tryptophan oxidase.